The primary structure comprises 347 residues: Isopentenyl-diphosphate delta-isomerase (347 aa).

The tract at residues 1 to 31 (MDESNSQFEKRKRDHIRIALDPRSQTDGQNG) is disordered. A compositionally biased stretch (basic and acidic residues) spans 8 to 20 (FEKRKRDHIRIAL). 11-12 (RK) provides a ligand contact to substrate. FMN is bound by residues Ser-72, 73-75 (SMT), Ser-103, and Asn-132. 103-105 (SQR) is a substrate binding site. Gln-166 lines the substrate pocket. Residue Glu-167 coordinates Mg(2+). Residues Lys-198, Ser-223, Thr-228, 279–281 (GVR), and 300–301 (AK) each bind FMN.

This sequence belongs to the IPP isomerase type 2 family. In terms of assembly, homooctamer. Dimer of tetramers. Requires FMN as cofactor. NADPH serves as cofactor. Mg(2+) is required as a cofactor.

Its subcellular location is the cytoplasm. It carries out the reaction isopentenyl diphosphate = dimethylallyl diphosphate. Its function is as follows. Involved in the biosynthesis of isoprenoids. Catalyzes the 1,3-allylic rearrangement of the homoallylic substrate isopentenyl (IPP) to its allylic isomer, dimethylallyl diphosphate (DMAPP). This is Isopentenyl-diphosphate delta-isomerase from Bdellovibrio bacteriovorus (strain ATCC 15356 / DSM 50701 / NCIMB 9529 / HD100).